The sequence spans 788 residues: Structure-specific endonuclease subunit SLX4 (788 aa).

3 disordered regions span residues 59 to 86 (LQNENLENKNKDTSITKPKRRSKRDNNR), 562 to 584 (KRQPVDSENEIRDSEDEGEHDNS), and 599 to 622 (DLVNLGRNPRNENDTSVLQVPSSP). Over residues 562 to 573 (KRQPVDSENEIR) the composition is skewed to basic and acidic residues. Residues 612-622 (DTSVLQVPSSP) are compositionally biased toward polar residues.

The protein belongs to the SLX4 family. In terms of assembly, forms a heterodimer with SLX1. In terms of processing, phosphorylated in response to DNA damage.

The protein localises to the nucleus. In terms of biological role, regulatory subunit of the SLX1-SLX4 structure-specific endonuclease that resolves DNA secondary structures generated during DNA repair and recombination. Has endonuclease activity towards branched DNA substrates, introducing single-strand cuts in duplex DNA close to junctions with ss-DNA. The polypeptide is Structure-specific endonuclease subunit SLX4 (Debaryomyces hansenii (strain ATCC 36239 / CBS 767 / BCRC 21394 / JCM 1990 / NBRC 0083 / IGC 2968) (Yeast)).